The sequence spans 150 residues: Globin-3 (150 aa).

The Globin domain maps to P11 to Y150. The heme b site is built by H74 and H106.

This sequence belongs to the globin family. Monomer.

This is Globin-3 from Petromyzon marinus (Sea lamprey).